A 457-amino-acid polypeptide reads, in one-letter code: Casein kinase 1-like protein 11 (457 aa).

The Protein kinase domain occupies 15–284 (FKLGRKLGSG…LRRLFRDLFI (270 aa)). Residues 21–29 (LGSGSFGEL) and Lys-44 contribute to the ATP site. Asp-134 (proton acceptor) is an active-site residue. Disordered regions lie at residues 305-337 (GSSS…GQDL) and 352-442 (NVSS…EDAI). Pro residues predominate over residues 311–324 (RPTPRPALDPPGPP). Polar residues-rich tracts occupy residues 383 to 403 (NGST…SAEP) and 409 to 429 (SRLF…QSYE).

Belongs to the protein kinase superfamily. CK1 Ser/Thr protein kinase family. Casein kinase I subfamily. As to quaternary structure, monomer. Autophosphorylated.

Its subcellular location is the cytoplasm. The protein localises to the nucleus. The catalysed reaction is L-seryl-[protein] + ATP = O-phospho-L-seryl-[protein] + ADP + H(+). It carries out the reaction L-threonyl-[protein] + ATP = O-phospho-L-threonyl-[protein] + ADP + H(+). Partially inhibited by N-(2-aminoethyl)-5-chloroisoquinoline-8-sulfonamide (CKI-7). Its function is as follows. Casein kinases are operationally defined by their preferential utilization of acidic proteins such as caseins as substrates. Can phosphorylate casein, phosvitin, myosin light chains and poly(Glu,Tyr) in vitro. The protein is Casein kinase 1-like protein 11 of Arabidopsis thaliana (Mouse-ear cress).